Here is a 738-residue protein sequence, read N- to C-terminus: Alcohol dehydrogenase (quinone), dehydrogenase subunit (738 aa).

Residues 1 to 35 (MISAVFGKRRSLSRTLTAGTICAALISGYATMASA) form the signal peptide. Glu97 is a pyrroloquinoline quinone binding site. Cys143 and Cys144 are disulfide-bonded. Arg149 serves as a coordination point for pyrroloquinoline quinone. Glu217 is a Ca(2+) binding site. Thr278 contacts pyrroloquinoline quinone. 2 residues coordinate Ca(2+): Asn298 and Asp343. Asp343 (proton acceptor) is an active-site residue. Pyrroloquinoline quinone contacts are provided by Lys370 and Ile584. The region spanning 634–738 (FDSKRTDNGY…NADGIPEQLP (105 aa)) is the Cytochrome c domain. Positions 650, 653, 654, and 693 each coordinate heme c.

This sequence belongs to the bacterial PQQ dehydrogenase family. In terms of assembly, the alcohol dehydrogenase multicomponent enzyme system is composed of a dehydrogenase subunit I (AdhA) and a cytochrome c subunit II (AdhB). It depends on pyrroloquinoline quinone as a cofactor. Ca(2+) is required as a cofactor. Requires heme c as cofactor.

The protein resides in the cell membrane. The enzyme catalyses ethanol + a ubiquinone = a ubiquinol + acetaldehyde. Dehydrogenase component of the alcohol dehydrogenase multicomponent enzyme system which is involved in the production of acetic acid and in the ethanol oxidase respiratory chain. Quinohemoprotein alcohol dehydrogenase (ADH) catalyzes the oxidation of ethanol to acetaldehyde by transferring electrons to the ubiquinone embedded in the membrane phospholipids. The electrons transfer from ethanol to membranous ubiquinone occurs from pyrroloquinoline quinone (PQQ) to one heme c in subunit I (AdhA), and finally to two heme c in subunit II (AdhB). Besides ubiquinone reduction, ADH also has a ubiquinol (QH2) oxidation reaction which mediates electron transfer from ubiquinol to the non-energy generating bypass oxidase system. The electrons transfer occurs from ubiquinol (QH2) to the additional heme c within subunit II (AdhB). The chain is Alcohol dehydrogenase (quinone), dehydrogenase subunit (adhA) from Gluconacetobacter polyoxogenes (Acetobacter polyoxogenes).